Consider the following 1083-residue polypeptide: Voltage-gated inwardly rectifying potassium channel KCNH3 (1083 aa).

Residues 1–228 (MPAMRGLLAP…HCGALRATWD (228 aa)) are Cytoplasmic-facing. A PAS domain is found at 18–90 (IATRFDGTHS…QQIRKALDEH (73 aa)). Residues 93–145 (FKAELILYRKSGLPFWCLLDVIPIKNEKGEVALFLVSHKDISETKNRGGPDRW) enclose the PAC domain. Over residues 137–150 (KNRGGPDRWKETGG) the composition is skewed to basic and acidic residues. The tract at residues 137–157 (KNRGGPDRWKETGGGRRRYGR) is disordered. Residues 229–249 (GFILLATLYVAVTVPYSVCVS) traverse the membrane as a helical segment. Topologically, residues 250-259 (TAREPSAARG) are extracellular. A helical transmembrane segment spans residues 260 to 280 (PPSVCDLAVEVLFILDIVLNF). Over 281–302 (RTTFVSKSGQVVFAPKSICLHY) the chain is Cytoplasmic. The chain crosses the membrane as a helical span at residues 303–323 (VTTWFLLDVIAALPFDLLHAF). The Extracellular portion of the chain corresponds to 324–331 (KVNVYFGA). Residues 332 to 352 (HLLKTVRLLRLLRLLPRLDRY) traverse the membrane as a helical; Voltage-sensor segment. The Cytoplasmic segment spans residues 353–361 (SQYSAVVLT). Residues 362 to 382 (LLMAVFALLAHWVACVWFYIG) form a helical membrane-spanning segment. The Extracellular segment spans residues 383–453 (QREIESSESE…GGPSLRSAYI (71 aa)). 3 N-linked (GlcNAc...) asparagine glycosylation sites follow: Asn421, Asn428, and Asn436. The segment at residues 454-474 (TSLYFALSSLTSVGFGNVSAN) is an intramembrane region (pore-forming). Positions 465-470 (SVGFGN) match the Selectivity filter motif. At 475-479 (TDTEK) the chain is on the extracellular side. A helical transmembrane segment spans residues 480–500 (IFSICTMLIGALMHAVVFGNV). Residues 501–1083 (TAIIQRMYAR…QWTQEEGTGV (583 aa)) lie on the Cytoplasmic side of the membrane. 582–697 (LFEAASRGCL…FAPRFSRGLR (116 aa)) serves as a coordination point for a nucleoside 3',5'-cyclic phosphate. 3 disordered regions span residues 729–810 (EEKE…LRLP), 832–873 (CGSD…SEAR), and 972–1055 (MAPW…ALPW). The segment covering 773–785 (TAPRPRLGGRGRP) has biased composition (basic residues). Positions 844 to 861 (GQSGPECSSSPSPGPESG) are enriched in low complexity.

The protein belongs to the potassium channel family. H (Eag) (TC 1.A.1.20) subfamily. Kv12.2/KCNH3 sub-subfamily. As to quaternary structure, the potassium channel is probably composed of a homo- or heterotetrameric complex of pore-forming alpha subunits that can associate with modulating beta subunits. Interacts with KCNE1 and KCNE3; these interactions regulate KCNH3 trafficking to the plasma membrane and its subsequent voltage-gated potassium channel activity. In terms of processing, N-glycosylated. N-glycosylation mediates traffick to the cell membrane but is not necessary for voltage-gated potassium channel activity. As to expression, detected only in brain, in particular in the telencephalon. Detected in the cerebral cortex, occipital pole, frontal and temporal lobe, putamen, amygdala, hippocampus and caudate nucleus.

It localises to the cell membrane. It carries out the reaction K(+)(in) = K(+)(out). Pore-forming (alpha) subunit of a voltage-gated inwardly rectifying potassium channel. Charactherized by a fast rate of activation during depolarization followed by a rapid inactivation at much more depolarized value causing inward rectification due to a C-type inactivation mechanism. Exhibits a rapid recovery from inactivation. This is Voltage-gated inwardly rectifying potassium channel KCNH3 from Homo sapiens (Human).